Reading from the N-terminus, the 135-residue chain is C-type lectin BPL (135 aa).

Cystine bridges form between C3–C14, C31–C131, C38–C133, and C106–C123. The C-type lectin domain occupies M10–Q132. Q96, D98, E104, and D120 together coordinate Ca(2+). The Galactose-binding motif lies at Q96–D98.

It belongs to the true venom lectin family. Homodimer; disulfide-linked. Expressed by the venom gland.

It is found in the secreted. In terms of biological role, galactose-binding protein which recognizes specific carbohydrate structures and agglutinates a variety of animal cells by binding to cell-surface glycoproteins and glycolipids. Calcium-dependent lectin. Shows high hemagglutinating activity in the presence of human erythrocytes, which are agglutinated with a minimum hemagglutination concentration (MHC) of 2.5-0.35 ug/ml. Causes indirect nephrotoxicity. Causes reductions in perfusion pressures, renal vascular resistance, urinary flow, glomerular filtration rate, sodium, potassium and chloride tubular transport. Its effects may be caused by the release of inflammatory mediators. The chain is C-type lectin BPL from Bothrops pirajai (Piraja's lancehead).